Here is a 172-residue protein sequence, read N- to C-terminus: Large ribosomal subunit protein uL10 (172 aa).

The protein belongs to the universal ribosomal protein uL10 family. Part of the ribosomal stalk of the 50S ribosomal subunit. The N-terminus interacts with L11 and the large rRNA to form the base of the stalk. The C-terminus forms an elongated spine to which L12 dimers bind in a sequential fashion forming a multimeric L10(L12)X complex.

In terms of biological role, forms part of the ribosomal stalk, playing a central role in the interaction of the ribosome with GTP-bound translation factors. This Chlorobium phaeovibrioides (strain DSM 265 / 1930) (Prosthecochloris vibrioformis (strain DSM 265)) protein is Large ribosomal subunit protein uL10.